The primary structure comprises 345 residues: UDP-3-O-acylglucosamine N-acyltransferase (345 aa).

The active-site Proton acceptor is His-237.

The protein belongs to the transferase hexapeptide repeat family. LpxD subfamily. As to quaternary structure, homotrimer.

The catalysed reaction is a UDP-3-O-[(3R)-3-hydroxyacyl]-alpha-D-glucosamine + a (3R)-hydroxyacyl-[ACP] = a UDP-2-N,3-O-bis[(3R)-3-hydroxyacyl]-alpha-D-glucosamine + holo-[ACP] + H(+). It participates in bacterial outer membrane biogenesis; LPS lipid A biosynthesis. Catalyzes the N-acylation of UDP-3-O-acylglucosamine using 3-hydroxyacyl-ACP as the acyl donor. Is involved in the biosynthesis of lipid A, a phosphorylated glycolipid that anchors the lipopolysaccharide to the outer membrane of the cell. This chain is UDP-3-O-acylglucosamine N-acyltransferase, found in Geobacter sp. (strain M21).